We begin with the raw amino-acid sequence, 421 residues long: Trimethyllysine dioxygenase, mitochondrial (421 aa).

Residues 1–15 (MWYHRLSHLHSRLQD) constitute a mitochondrion transit peptide. N6-acetyllysine occurs at positions 179 and 236. His242, Asp244, and His389 together coordinate Fe cation.

It belongs to the gamma-BBH/TMLD family. As to quaternary structure, homodimer. Requires Fe(2+) as cofactor. L-ascorbate is required as a cofactor. All isoforms, but isoform 8, are widely expressed in adult and fetal tissues. Isoform 8 is restricted to heart and skeletal muscle.

Its subcellular location is the mitochondrion matrix. It catalyses the reaction N(6),N(6),N(6)-trimethyl-L-lysine + 2-oxoglutarate + O2 = (3S)-3-hydroxy-N(6),N(6),N(6)-trimethyl-L-lysine + succinate + CO2. It participates in amine and polyamine biosynthesis; carnitine biosynthesis. Its function is as follows. Converts trimethyllysine (TML) into hydroxytrimethyllysine (HTML). The protein is Trimethyllysine dioxygenase, mitochondrial (TMLHE) of Homo sapiens (Human).